We begin with the raw amino-acid sequence, 556 residues long: Polypeptide N-acetylgalactosaminyltransferase 13 (556 aa).

The Cytoplasmic segment spans residues 1-4 (MRRL). A helical; Signal-anchor for type II membrane protein transmembrane segment spans residues 5–27 (VYCKVVLATSLMWVLVDVFLLLY). Topologically, residues 28–556 (FSECNKCDDK…WLLRNMTLGT (529 aa)) are lumenal. 2 N-linked (GlcNAc...) asparagine glycosylation sites follow: N94 and N116. 5 cysteine pairs are disulfide-bonded: C105–C338, C329–C407, C441–C458, C481–C496, and C522–C539. The tract at residues 114–224 (LPNTSVVIVF…LGWLEPLLAR (111 aa)) is catalytic subdomain A. D155 and R185 together coordinate substrate. Mn(2+)-binding residues include D208 and H210. Residues 284–346 (PVRTPTMAGG…TCSHVGHVFR (63 aa)) are catalytic subdomain B. W315 serves as a coordination point for substrate. Residue H343 participates in Mn(2+) binding. R346 and Y351 together coordinate substrate. The Ricin B-type lectin domain occupies 428-550 (YSLGEIRNVE…GSRSQQWLLR (123 aa)). An N-linked (GlcNAc...) asparagine glycan is attached at N551.

This sequence belongs to the glycosyltransferase 2 family. GalNAc-T subfamily. Mn(2+) serves as cofactor.

The protein resides in the golgi apparatus membrane. It catalyses the reaction L-seryl-[protein] + UDP-N-acetyl-alpha-D-galactosamine = a 3-O-[N-acetyl-alpha-D-galactosaminyl]-L-seryl-[protein] + UDP + H(+). The catalysed reaction is L-threonyl-[protein] + UDP-N-acetyl-alpha-D-galactosamine = a 3-O-[N-acetyl-alpha-D-galactosaminyl]-L-threonyl-[protein] + UDP + H(+). Its pathway is protein modification; protein glycosylation. Its function is as follows. Catalyzes the initial reaction in O-linked oligosaccharide biosynthesis, the transfer of an N-acetyl-D-galactosamine (GalNAc) residue from UDP-GalNAc to a serine or threonine residue on the protein receptor. Generates GalNAc-O-Ser/Thr structure also known as Tn antigen, which itself is immunogenic but also serves as a precursor for the synthesis of different mucin-type O-glycan core structures. Contributes to the synthesis of O-linked glycans on mucins and proteoglycans of the central nervous system. Can glycosylate both unmodified peptides and glycopeptides that already contain an O-linked GalNAc sugar. Transfers GalNAc to Thr-/Ser-rich tandem repeats GTTPSPVPTTSTTSAP of MUC5AC. Transfers GalNAc to three consecutive serine/threonine residues on SDC3 forming a triplet-Tn epitope expressed in Purkinje cells of the developing brain. May promote neurogenesis through glycosylation and stabilization of PDPN. The protein is Polypeptide N-acetylgalactosaminyltransferase 13 (Galnt13) of Rattus norvegicus (Rat).